A 252-amino-acid chain; its full sequence is ELH type 2 (252 aa).

An N-terminal signal peptide occupies residues 1–19; that stretch reads AISLLMCLILSALCASSES. 3 propeptides span residues 20–75, 92–130, and 144–185; these read AVVH…VNNE, PQEV…QREL, and AAGD…SGIA. Over residues 145–161 the composition is skewed to basic and acidic residues; it reads AGDEDKAEEHNPETESH. Positions 145-171 are disordered; sequence AGDEDKAEEHNPETESHSRRKRSALTP. Lys222 carries the post-translational modification Lysine amide.

The protein belongs to the molluscan ELH family. Bag cell neurons.

The protein localises to the secreted. Functionally, ELH acts as a neurotransmitter locally, upon neurons of the abdominal ganglion and as a hormone by diffusing into the circulating hemolymph and modulating the activity of other organs. It specifically causes contraction of smooth muscle in the ovotestis and expulsion of the egg string. Alpha-BCP decreases the activity of a cluster of neurons in the left upper quadrant of the abdominal ganglion. Its function is as follows. Beta-BCP specifically excites 2 neurons, L1 and R1, in the abdominal ganglion. The chain is ELH type 2 (ELH2) from Aplysia parvula (Dwarf sea hare).